The chain runs to 477 residues: Epoxyalcohol synthase CYP5164B1 (477 aa).

Cys-421 contacts heme.

Belongs to the cytochrome P450 family. Heme is required as a cofactor.

The catalysed reaction is (9S)-hydroperoxy-(10E,12Z)-octadecadienoate = (11S)-hydroxy-(9S,10S)-epoxy-(12Z)-octadecenoate. The enzyme catalyses (13S)-hydroperoxy-(9Z,11E)-octadecadienoate = 11-hydroxy-12,13-epoxy-(9Z)-octadecenoate. Its pathway is lipid metabolism; oxylipin biosynthesis. Its function is as follows. Cytochrome P450 epoxyalcohol synthase involved in the metabolism of oxylipins 'ectocarpins' natural products, such as hybridalactone, ecklonilactones and derivatives. Isomerizes the hydroperoxides into epoxyalcohols via epoxyallylic radical. Can use linoleic acid 9-hydroperoxide ((9S,10E,12Z)-9-hydroperoxy-10,12-octadecadienoic, 9-HPOD) as preferred substrate to produce (9S,10S,11S,12Z)-9,10-epoxy-11-hydroxy-12-octadecenoic acid and, to a lower extent, active with linoleate 13-hydroperoxide ((9Z,11E,13S)-13-hydroperoxy-9,11-octadecadienoic, 13-HPOD) to produce 11-hydroxy-12,13-epoxy-9-octadecenoic acid. No activity toward alpha-linolenic acid 9- and 13-hydroperoxides, and toward eicosapentaenoic acid 15-hydroperoxide. In Ectocarpus siliculosus (Brown alga), this protein is Epoxyalcohol synthase CYP5164B1.